Reading from the N-terminus, the 444-residue chain is Trigger factor (444 aa).

The PPIase FKBP-type domain occupies 165 to 250 (GDFAKFDFEG…LHEIQELKIP (86 aa)).

This sequence belongs to the FKBP-type PPIase family. Tig subfamily.

The protein resides in the cytoplasm. It carries out the reaction [protein]-peptidylproline (omega=180) = [protein]-peptidylproline (omega=0). Functionally, involved in protein export. Acts as a chaperone by maintaining the newly synthesized protein in an open conformation. Functions as a peptidyl-prolyl cis-trans isomerase. The chain is Trigger factor from Campylobacter jejuni subsp. jejuni serotype O:23/36 (strain 81-176).